The following is a 715-amino-acid chain: uncharacterized protein (715 aa).

The helical transmembrane segment at 688–708 (VWKFNPALYSTITNIFLLIIF) threads the bilayer.

This sequence belongs to the plectrovirus ORF1 family.

Its subcellular location is the host membrane. This is an uncharacterized protein from Spiroplasma virus SpV1-R8A2 B (SpV1).